The sequence spans 1363 residues: Spike glycoprotein (1363 aa).

The N-terminal stretch at 1–13 (MFLILLISLPMAL) is a signal peptide. At 14 to 1307 (AVIGDLKCTT…GTYEYYVKWP (1294 aa)) the chain is on the extracellular side. Residues 15 to 298 (VIGDLKCTTV…DFMSEIKCKT (284 aa)) form the BetaCoV S1-NTD domain. Intrachain disulfides connect Cys21–Cys165, Cys160–Cys193, Cys172–Cys252, Cys286–Cys296, and Cys331–Cys356. N-linked (GlcNAc...) asparagine; by host glycosylation is found at Asn59 and Asn133. A glycan (N-linked (GlcNAc...) asparagine; by host) is linked at Asn198. The 289-residue stretch at 329–617 (PDCNIEAWLN…DVNSGTTCST (289 aa)) folds into the BetaCoV S1-CTD domain. Asn359 carries N-linked (GlcNAc...) asparagine; by host glycosylation. 2 cysteine pairs are disulfide-bonded: Cys374–Cys427 and Cys386–Cys615. N-linked (GlcNAc...) asparagine; by host glycans are attached at residues Asn437, Asn649, Asn676, Asn696, Asn714, Asn739, and Asn788. 2 fusion peptide regions span residues 914-935 (SAIEDLLFSKVKLSDVGFVEAY) and 933-953 (EAYNNCTGGAEIRDLICVQSY). A glycan (N-linked (GlcNAc...) asparagine; by host) is linked at Asn937. Cys938 and Cys949 are joined by a disulfide. The segment at 1014–1064 (QKLIANAFNNALDAIQEGFDATNSALVKIQAVVNANAEALNNLLQQLSNRF) is heptad repeat 1. Residues 1043-1087 (QAVVNANAEALNNLLQQLSNRFGAISSSLQEILSRLDALEAQAQI) are a coiled coil. Asn1194, Asn1224, Asn1234, Asn1253, Asn1267, and Asn1288 each carry an N-linked (GlcNAc...) asparagine; by host glycan. Residues 1258 to 1296 (APDLSLDYINVTFLDLQDEMNRLQEAIKVLNQSYINLKD) are heptad repeat 2. Residues 1269–1297 (TFLDLQDEMNRLQEAIKVLNQSYINLKDI) are a coiled coil. The helical transmembrane segment at 1308–1328 (WYVWLLIGLAGVAMLVLLFFI) threads the bilayer. Over 1329-1363 (CCCTGCGTSCFKKCGGCCDDYTGHQELVIKTSHDD) the chain is Cytoplasmic. The KxHxx signature appears at 1359–1363 (TSHDD).

Belongs to the betacoronaviruses spike protein family. As to quaternary structure, homotrimer; each monomer consists of a S1 and a S2 subunit. The resulting peplomers protrude from the virus surface as spikes. Post-translationally, specific enzymatic cleavages in vivo yield mature proteins. The precursor is processed into S1 and S2 by host cell furin or another cellular protease to yield the mature S1 and S2 proteins. Additionally, a second cleavage leads to the release of a fusion peptide after viral attachment to host cell receptor. In terms of processing, the cytoplasmic Cys-rich domain is palmitoylated. Spike glycoprotein is digested within host endosomes.

It localises to the virion membrane. The protein resides in the host endoplasmic reticulum-Golgi intermediate compartment membrane. The protein localises to the host cell membrane. Functionally, attaches the virion to the cell membrane by interacting with host receptor, initiating the infection. Its function is as follows. Mediates fusion of the virion and cellular membranes by acting as a class I viral fusion protein. Under the current model, the protein has at least three conformational states: pre-fusion native state, pre-hairpin intermediate state, and post-fusion hairpin state. During viral and target cell membrane fusion, the coiled coil regions (heptad repeats) assume a trimer-of-hairpins structure, positioning the fusion peptide in close proximity to the C-terminal region of the ectodomain. The formation of this structure appears to drive apposition and subsequent fusion of viral and target cell membranes. In terms of biological role, acts as a viral fusion peptide which is unmasked following S2 cleavage occurring upon virus endocytosis. This Bos taurus (Bovine) protein is Spike glycoprotein.